The sequence spans 714 residues: ATP-dependent DNA helicase DinG (714 aa).

Positions 17–294 (ALQDQIPDFI…TCMEQFRPKT (278 aa)) constitute a Helicase ATP-binding domain. 54 to 61 (APTGVGKT) is a binding site for ATP. C120, C194, C199, and C205 together coordinate [4Fe-4S] cluster. The DEAH box signature appears at 248–251 (DEGH). The Helicase C-terminal domain maps to 517–698 (HIAEMAAYFR…VFPIEQPAVP (182 aa)).

The protein belongs to the helicase family. DinG subfamily. Type 1 sub-subfamily. The cofactor is [4Fe-4S] cluster.

The catalysed reaction is Couples ATP hydrolysis with the unwinding of duplex DNA at the replication fork by translocating in the 5'-3' direction. This creates two antiparallel DNA single strands (ssDNA). The leading ssDNA polymer is the template for DNA polymerase III holoenzyme which synthesizes a continuous strand.. It carries out the reaction ATP + H2O = ADP + phosphate + H(+). DNA-dependent ATPase and 5'-3' DNA helicase. Unwinds D-loops, R-loops, forked DNA and G-quadruplex DNA. In Salmonella typhimurium (strain LT2 / SGSC1412 / ATCC 700720), this protein is ATP-dependent DNA helicase DinG.